The chain runs to 100 residues: Co-chaperonin GroES (100 aa).

The protein belongs to the GroES chaperonin family. As to quaternary structure, heptamer of 7 subunits arranged in a ring. Interacts with the chaperonin GroEL.

It localises to the cytoplasm. Functionally, together with the chaperonin GroEL, plays an essential role in assisting protein folding. The GroEL-GroES system forms a nano-cage that allows encapsulation of the non-native substrate proteins and provides a physical environment optimized to promote and accelerate protein folding. GroES binds to the apical surface of the GroEL ring, thereby capping the opening of the GroEL channel. This is Co-chaperonin GroES from Mycolicibacterium paratuberculosis (strain ATCC BAA-968 / K-10) (Mycobacterium paratuberculosis).